A 93-amino-acid chain; its full sequence is Chaperone NapD (93 aa).

The protein belongs to the NapD family. In terms of assembly, interacts with the cytoplasmic NapA precursor.

Its subcellular location is the cytoplasm. In terms of biological role, chaperone for NapA, the catalytic subunit of the periplasmic nitrate reductase. It binds directly and specifically to the twin-arginine signal peptide of NapA, preventing premature interaction with the Tat translocase and premature export. In Haemophilus influenzae (strain ATCC 51907 / DSM 11121 / KW20 / Rd), this protein is Chaperone NapD.